Consider the following 205-residue polypeptide: Beta-crystallin B2 (205 aa).

Residue A2 is modified to N-acetylalanine. An N-terminal arm region spans residues 2–16 (ASDHQTQAGKPQPLN). Beta/gamma crystallin 'Greek key' domains follow at residues 17–56 (PKIIIFEQENFQGHSHELSGPCPNLKETGVEKAGSVLVQA) and 57–101 (GPWV…RPIK). The tract at residues 102–106 (VDSQE) is connecting peptide. Beta/gamma crystallin 'Greek key' domains follow at residues 107 to 148 (HKII…RVQS) and 149 to 191 (GTWV…RRIR). A C-terminal arm region spans residues 193 to 205 (MQWHQRGAFHPSN).

Belongs to the beta/gamma-crystallin family. As to quaternary structure, homo/heterodimer, or complexes of higher-order. The structure of beta-crystallin oligomers seems to be stabilized through interactions between the N-terminal arms.

Its function is as follows. Crystallins are the dominant structural components of the vertebrate eye lens. The protein is Beta-crystallin B2 (CRYBB2) of Canis lupus familiaris (Dog).